Reading from the N-terminus, the 285-residue chain is Inositol monophosphatase 1 (285 aa).

Residues Glu-73, Asp-93, Ile-95, and Asp-96 each contribute to the Mg(2+) site. Position 73 (Glu-73) interacts with substrate. Residues 95–98 (IDGT), 198–200 (GTA), Glu-217, and Asp-224 each bind substrate. Residue Asp-224 coordinates Mg(2+).

Belongs to the inositol monophosphatase superfamily. In terms of assembly, homodimer. Mg(2+) serves as cofactor.

The protein resides in the cytoplasm. The catalysed reaction is a myo-inositol phosphate + H2O = myo-inositol + phosphate. It carries out the reaction 1D-myo-inositol 1-phosphate + H2O = myo-inositol + phosphate. The enzyme catalyses 1D-myo-inositol 2-phosphate + H2O = myo-inositol + phosphate. It catalyses the reaction 1D-myo-inositol 3-phosphate + H2O = myo-inositol + phosphate. The catalysed reaction is 1D-myo-inositol 4-phosphate + H2O = myo-inositol + phosphate. It carries out the reaction 1D-myo-inositol 5-phosphate + H2O = myo-inositol + phosphate. The enzyme catalyses 1D-myo-inositol 6-phosphate + H2O = myo-inositol + phosphate. It catalyses the reaction scyllo-inositol 1-phosphate + H2O = scyllo-inositol + phosphate. The catalysed reaction is alpha-D-galactose 1-phosphate + H2O = D-galactose + phosphate. It carries out the reaction alpha-D-glucose 1-phosphate + H2O = D-glucose + phosphate. The enzyme catalyses D-glucose 6-phosphate + H2O = D-glucose + phosphate. It catalyses the reaction beta-D-fructose 1-phosphate + H2O = D-fructose + phosphate. The catalysed reaction is glycerol 2-phosphate + H2O = glycerol + phosphate. It carries out the reaction adenosine 2'-phosphate + H2O = adenosine + phosphate. It participates in polyol metabolism; myo-inositol biosynthesis; myo-inositol from D-glucose 6-phosphate: step 2/2. Its activity is regulated as follows. Inhibited by Li(+), Ca(2+) and Mn(2+), but also by Mg(2+) at concentrations above 3 mM. Its function is as follows. Phosphatase involved in the dephosphorylation of myo-inositol monophosphate to generate myo-inositol. Is also able to dephosphorylate scyllo-inositol-phosphate, myo-inositol 1,4-diphosphate, scyllo-inositol-1,3-diphosphate and scyllo-inositol-1,4-diphosphate. Also dephosphorylates in vitro other sugar-phosphates including D-galactose-1-phosphate, glucose-1-phosphate, glucose-6-phosphate, fructose-1-phosphate, beta-glycerophosphate and 2'-AMP. Responsible for the provision of inositol required for synthesis of phosphatidylinositol and polyphosphoinositides, and involved in maintaining normal brain function. Has been implicated as the pharmacological target for lithium Li(+) action in brain. The polypeptide is Inositol monophosphatase 1 (impa1) (Xenopus laevis (African clawed frog)).